The primary structure comprises 908 residues: MFGKLLTKVFGSRNDRTLKGLQKVVNKINALEADYEKLTDEQLKAKTAEFRERLAAGASLESIMAEAFATVREASKRVFEMRHFDVQLLGGMVLDSNRIAEMRTGEGKTLTATLPAYLNALTGKGVHVITVNDYLARRDAENNRPLFEFLGLTVGINVAGLGQQAKKDAYNADITYGTNNEFGFDYLRDNMAFSPQERVQRPLHYALIDEVDSILIDEARTPLIISGAAEDSSELYIKINTLIPSLIRQDKEDSEEYVGEGDYSIDEKAKQVHFTERGQEKVENLLIERGMLAEGDSLYSAANISLLHHVNAALRAHTLFERDVDYIVQDGEVIIVDEHTGRTMPGRRWSEGLHQAVEAKEGVRIQNENQTLASITFQNYFRLYEKLAGMTGTADTEAFEFQHIYGLDTVVVPTNRPMVRKDMADLVYLTANEKYQAIIKDIKDCRERGQPVLVGTVSIEQSELLARLMVKEKIPHQVLNAKFHEKEAEIVAQAGRTGAVTIATNMAGRGTDIVLGGNWNMEIEALENPTAEQKAKIKADWQERHDAVVAAGGLHILGTERHESRRIDNQLRGRAGRQGDAGSSRFYLSMEDSLMRIFASDRVSGMMKKLGMEEGEAIEHPWVSRAIENAQRKVEARNFDIRKQLLEFDDVANDQRQVVYAQRNELMDAESIEDTIKNIQDDVISAVIDQYIPPQSVEELWDVPGLEQRLQQEFMLKLPIQEWLDKEDDLHEETLRERIITSWSDAYKAKEEMVGAPVLRQFEKAVMLQTLDGLWKEHLAAMDHLRQGIHLRGYAQKNPKQEYKRESFELFQQLLSTLKHDVISVLSKVQVQAQSDVEEMEARRREEDAKIQRDYQHAAAEALVGGDDGSDEMMAHTPMIRDGDKVGRNDPCPCGSGRKYKQCHGKLS.

Residues Gln-87, 105-109 (GEGKT), and Asp-512 contribute to the ATP site. A disordered region spans residues 865–908 (GGDDGSDEMMAHTPMIRDGDKVGRNDPCPCGSGRKYKQCHGKLS). The segment covering 879–888 (MIRDGDKVGR) has biased composition (basic and acidic residues). Residues Cys-892, Cys-894, Cys-903, and His-904 each coordinate Zn(2+). A compositionally biased stretch (basic residues) spans 898-908 (RKYKQCHGKLS).

It belongs to the SecA family. In terms of assembly, monomer and homodimer. Part of the essential Sec protein translocation apparatus which comprises SecA, SecYEG and auxiliary proteins SecDF-YajC and YidC. The cofactor is Zn(2+).

The protein resides in the cell inner membrane. The protein localises to the cytoplasm. It carries out the reaction ATP + H2O + cellular proteinSide 1 = ADP + phosphate + cellular proteinSide 2.. In terms of biological role, part of the Sec protein translocase complex. Interacts with the SecYEG preprotein conducting channel. Has a central role in coupling the hydrolysis of ATP to the transfer of proteins into and across the cell membrane, serving both as a receptor for the preprotein-SecB complex and as an ATP-driven molecular motor driving the stepwise translocation of polypeptide chains across the membrane. This chain is Protein translocase subunit SecA, found in Shewanella sp. (strain ANA-3).